The chain runs to 303 residues: Imidazoleglycerol-phosphate dehydratase (303 aa).

The protein belongs to the imidazoleglycerol-phosphate dehydratase family.

It is found in the cytoplasm. The catalysed reaction is D-erythro-1-(imidazol-4-yl)glycerol 3-phosphate = 3-(imidazol-4-yl)-2-oxopropyl phosphate + H2O. Its pathway is amino-acid biosynthesis; L-histidine biosynthesis; L-histidine from 5-phospho-alpha-D-ribose 1-diphosphate: step 6/9. The polypeptide is Imidazoleglycerol-phosphate dehydratase (Neisseria gonorrhoeae (strain ATCC 700825 / FA 1090)).